Here is a 314-residue protein sequence, read N- to C-terminus: MQIKLANPRGFCAGVDRAIEIVNRALEVFGPPIYVRHEVVHNKFVVEDLRIRGAIFVEELDQVPDDVIVIFSAHGVSQAVRTEAAGRGLKVFDATCPLVTKVHIEVAKYSRDGRECILIGHAGHPEVEGTMGQYDASNGGAIYLVEDEKDVAELQVHNPDKLAFVTQTTLSMDDTSRVIDALRTRFPAIGGPRKDDICYATQNRQDAVKQLADECDVVLVVGSPNSSNSNRLRELAERMATPAYLIDGAEDLQKSWFDGVERIGITAGASAPEVLVRGVIQQLQAWGATGADELAGREENITFSMPKELRVRSI.

Cys12 provides a ligand contact to [4Fe-4S] cluster. His41 and His74 together coordinate (2E)-4-hydroxy-3-methylbut-2-enyl diphosphate. Dimethylallyl diphosphate-binding residues include His41 and His74. 2 residues coordinate isopentenyl diphosphate: His41 and His74. Cys96 lines the [4Fe-4S] cluster pocket. His124 lines the (2E)-4-hydroxy-3-methylbut-2-enyl diphosphate pocket. His124 is a dimethylallyl diphosphate binding site. Residue His124 participates in isopentenyl diphosphate binding. Glu126 (proton donor) is an active-site residue. Thr168 is a binding site for (2E)-4-hydroxy-3-methylbut-2-enyl diphosphate. Cys198 is a [4Fe-4S] cluster binding site. Ser226, Ser227, Asn228, and Ser270 together coordinate (2E)-4-hydroxy-3-methylbut-2-enyl diphosphate. Dimethylallyl diphosphate is bound by residues Ser226, Ser227, Asn228, and Ser270. Isopentenyl diphosphate is bound by residues Ser226, Ser227, Asn228, and Ser270.

The protein belongs to the IspH family. [4Fe-4S] cluster serves as cofactor.

It carries out the reaction isopentenyl diphosphate + 2 oxidized [2Fe-2S]-[ferredoxin] + H2O = (2E)-4-hydroxy-3-methylbut-2-enyl diphosphate + 2 reduced [2Fe-2S]-[ferredoxin] + 2 H(+). The catalysed reaction is dimethylallyl diphosphate + 2 oxidized [2Fe-2S]-[ferredoxin] + H2O = (2E)-4-hydroxy-3-methylbut-2-enyl diphosphate + 2 reduced [2Fe-2S]-[ferredoxin] + 2 H(+). It participates in isoprenoid biosynthesis; dimethylallyl diphosphate biosynthesis; dimethylallyl diphosphate from (2E)-4-hydroxy-3-methylbutenyl diphosphate: step 1/1. Its pathway is isoprenoid biosynthesis; isopentenyl diphosphate biosynthesis via DXP pathway; isopentenyl diphosphate from 1-deoxy-D-xylulose 5-phosphate: step 6/6. Functionally, catalyzes the conversion of 1-hydroxy-2-methyl-2-(E)-butenyl 4-diphosphate (HMBPP) into a mixture of isopentenyl diphosphate (IPP) and dimethylallyl diphosphate (DMAPP). Acts in the terminal step of the DOXP/MEP pathway for isoprenoid precursor biosynthesis. This Pseudomonas fluorescens (strain Pf0-1) protein is 4-hydroxy-3-methylbut-2-enyl diphosphate reductase.